The primary structure comprises 794 residues: Transcription factor TOG1 (794 aa).

6 residues coordinate Zn(2+): Cys18, Cys21, Cys28, Cys34, Cys37, and Cys44. The zn(2)-C6 fungal-type DNA-binding region spans Cys18–Cys44.

The protein localises to the nucleus. Functionally, transcriptional activator required for growth on non-fermentable carbon sources and that regulates genes involved in fatty acid utilization. Acts as a direct activator that binds the promoters of oleate utilizing genes, encoded key enzymes in beta-oxidation and NADPH regeneration (POX1, FOX2,POT1 and IDP2), the glyoxylate shunt (MLS1 and ICL1), and gluconeogenesis (PCK1 and FBP1). Also regulates the abundance of peroxisomes that are vital for fatty acid oxidation. The chain is Transcription factor TOG1 from Saccharomyces cerevisiae (strain ATCC 204508 / S288c) (Baker's yeast).